We begin with the raw amino-acid sequence, 21 residues long: Kassinatuerin-1 (21 aa).

I21 bears the Isoleucine amide mark.

In terms of tissue distribution, expressed by the skin dorsal glands.

It localises to the secreted. Its function is as follows. Shows broad-spectrum antimicrobial activity against the Gram-negative bacterium E.coli (MIC=6.25 uM), K.pneumoniae (MIC=25 uM), E.cloacae (MIC=6.25 uM), P.aeruginosa (MIC=25 uM), the Gram-positive bacterium S.aureus (MIC=6.25 uM), S.epidermidis (MIC=6.25 uM), E.faecalis (MIC=12.5 uM), and the fungus C.albicans (MIC=100 uM). Has no antimicrobial effect against P.mirabilis (MIC&gt;100 uM). Has relatively high cytolytic and hemolytic activities. Its alpha-helix has considerable amphipathic character. The sequence is that of Kassinatuerin-1 from Kassina senegalensis (Senegal running frog).